Reading from the N-terminus, the 744-residue chain is Probable ubiquitin carboxyl-terminal hydrolase MINDY-4 (744 aa).

3 positions are modified to phosphoserine: Ser-143, Ser-220, and Ser-224. Residues 211-358 (GMMAGPVASS…QLVSDRTDDK (148 aa)) are disordered. Residues 265-277 (VPDSSSDSVSRSP) show a composition bias toward low complexity. The segment covering 290 to 299 (NVTSSSQGLS) has biased composition (polar residues). The residue at position 295 (Ser-295) is a Phosphoserine. Positions 300–310 (QRDRPRLRSVS) are enriched in basic and acidic residues. Cys-443 functions as the Nucleophile in the catalytic mechanism. His-664 (proton acceptor) is an active-site residue.

This sequence belongs to the MINDY deubiquitinase family. FAM188 subfamily.

It carries out the reaction Thiol-dependent hydrolysis of ester, thioester, amide, peptide and isopeptide bonds formed by the C-terminal Gly of ubiquitin (a 76-residue protein attached to proteins as an intracellular targeting signal).. Functionally, probable hydrolase that can remove 'Lys-48'-linked conjugated ubiquitin from proteins. This chain is Probable ubiquitin carboxyl-terminal hydrolase MINDY-4 (Mindy4), found in Mus musculus (Mouse).